The primary structure comprises 141 residues: Nucleoside diphosphate kinase (141 aa).

6 residues coordinate ATP: lysine 9, phenylalanine 57, arginine 85, threonine 91, arginine 102, and asparagine 112. Histidine 115 functions as the Pros-phosphohistidine intermediate in the catalytic mechanism.

This sequence belongs to the NDK family. In terms of assembly, homotetramer. The cofactor is Mg(2+).

The protein localises to the cytoplasm. The catalysed reaction is a 2'-deoxyribonucleoside 5'-diphosphate + ATP = a 2'-deoxyribonucleoside 5'-triphosphate + ADP. It catalyses the reaction a ribonucleoside 5'-diphosphate + ATP = a ribonucleoside 5'-triphosphate + ADP. In terms of biological role, major role in the synthesis of nucleoside triphosphates other than ATP. The ATP gamma phosphate is transferred to the NDP beta phosphate via a ping-pong mechanism, using a phosphorylated active-site intermediate. The chain is Nucleoside diphosphate kinase from Chlamydia trachomatis serovar L2 (strain ATCC VR-902B / DSM 19102 / 434/Bu).